Reading from the N-terminus, the 582-residue chain is Semenogelin-2 (582 aa).

An N-terminal signal peptide occupies residues methionine 1–glycine 23. Residues glutamine 24–serine 59 form a disordered region. Residues glutamine 31–proline 40 are compositionally biased toward polar residues. Tandem repeats lie at residues histidine 70–histidine 129, asparagine 141–glutamate 200, and leucine 201–leucine 260. A repeat-rich region region spans residues histidine 70 to threonine 559. Disordered stretches follow at residues glycine 132 to serine 160, lysine 173 to tyrosine 194, glutamate 228 to histidine 248, and glutamine 269 to threonine 582. 2 stretches are compositionally biased toward polar residues: residues histidine 137 to serine 160 and glutamate 174 to tyrosine 194. The segment at leucine 261–lysine 500 is 4 X 60 AA tandem repeats, type I. Asparagine 272 carries N-linked (GlcNAc...) asparagine glycosylation. Positions arginine 292–serine 310 are enriched in basic and acidic residues. The segment covering lysine 325–serine 334 has biased composition (polar residues). Positions glutamine 335–lysine 345 are enriched in basic and acidic residues. The segment covering glycine 372–glutamine 397 has biased composition (polar residues). Basic and acidic residues predominate over residues threonine 413–glutamine 426. The span at lysine 445–glutamine 455 shows a compositional bias: polar residues. The segment covering aspartate 456–lysine 465 has biased composition (basic and acidic residues). Composition is skewed to polar residues over residues glycine 482–phenylalanine 496 and serine 506–aspartate 532. The stretch at leucine 501–threonine 559 is one 3-2 repeat. Composition is skewed to basic and acidic residues over residues serine 533–glutamate 552 and threonine 559–threonine 582.

The protein belongs to the semenogelin family. In terms of assembly, interacts with SERPINA5. Semenogelin-2 is thought to form both the 71 kDa polypeptide and, in its glycosylated form, the 76 kDa polypeptide. In terms of tissue distribution, seminal vesicles, and to a much lesser extent, epididymis.

It is found in the secreted. Its function is as follows. Participates in the formation of a gel matrix (sperm coagulum) entrapping the accessory gland secretions and ejaculated spermatozoa. The sequence is that of Semenogelin-2 (SEMG2) from Homo sapiens (Human).